The following is a 674-amino-acid chain: Translation factor GUF1, mitochondrial (674 aa).

The transit peptide at 1-33 (MLRPWFCFRSCVSLLSNRRQYGFRYLATAEPSK) directs the protein to the mitochondrion. The tract at residues 32–51 (SKSEKPAKPVKPAKPMSVQE) is disordered. The 183-residue stretch at 75–257 (QNYRNFSIVA…SIIKNIPAPV (183 aa)) folds into the tr-type G domain. GTP-binding positions include 84 to 91 (AHVDHGKS), 150 to 154 (DTPGH), and 204 to 207 (NKID).

It belongs to the TRAFAC class translation factor GTPase superfamily. Classic translation factor GTPase family. LepA subfamily.

Its subcellular location is the mitochondrion inner membrane. The catalysed reaction is GTP + H2O = GDP + phosphate + H(+). In terms of biological role, promotes mitochondrial protein synthesis. May act as a fidelity factor of the translation reaction, by catalyzing a one-codon backward translocation of tRNAs on improperly translocated ribosomes. Binds to mitochondrial ribosomes in a GTP-dependent manner. This is Translation factor GUF1, mitochondrial from Lodderomyces elongisporus (strain ATCC 11503 / CBS 2605 / JCM 1781 / NBRC 1676 / NRRL YB-4239) (Yeast).